The following is a 141-amino-acid chain: MSIERLLKAQQEETRDIVQSLLDDGSDPDAEYMIEHHFSSTNFDRLEKAAVDAFKLGFEVTDAEELELDDGSVILCFDAIANHALDVDLIDKACEQLINLAAKQKVDYDGWGTYFMGDDEDFDDEDDDEDYDKDGFPIERH.

Acidic residues predominate over residues 119–132 (DEDFDDEDDDEDYD). Residues 119–141 (DEDFDDEDDDEDYDKDGFPIERH) are disordered.

Belongs to the RraB family. In terms of assembly, interacts with the C-terminal region of Rne.

The protein localises to the cytoplasm. Its function is as follows. Globally modulates RNA abundance by binding to RNase E (Rne) and regulating its endonucleolytic activity. Can modulate Rne action in a substrate-dependent manner by altering the composition of the degradosome. The sequence is that of Regulator of ribonuclease activity B from Shewanella amazonensis (strain ATCC BAA-1098 / SB2B).